Here is a 571-residue protein sequence, read N- to C-terminus: MRTSQYLLATQKETPADAVVISHQLMLRAGMIRKLASGLYTWLPMGLRVMRKVEAVVREEMNAAGALEVLMPSIQPAELWQESGRWEQYGPELLRLKDRHQRDFCVGPTHEEVITDLARNELSSYKQLPLNMYQIQTKFRDEIRPRFGLMRGREFIMKDAYSFHADQASLQETYDRMHQAYSNIFTRLGLDFRPVQADTGSIGGSYSHEFHVLAESGEDDVIFSDSSDYAANIEKAEAIPRETARLAPTEELRLVDTPDAKTIAQLVENYGLPIEKTVKTLIVRGAEEGKLVALIVRGDHELNEIKAAKLEQVADPLVMATDAELREAIGAGAGSLGPLNLPLECIIDRSVALMSDFGIGANIDDKHYFGVNWERDLPVPQVADLRNVVEGDPSPDGQGTLVIKRGIEVGHIFQLGTKYSEALKCQVLGENGKPVVLSMGCYGIGVSRVVAAAIEQSYDDKGIIWNDALAPFQIALVPLRYETDVVREATDKLYAELTAAGFEVLLDDRDKKTSPGIKFADMELIGIPHRIVVSDRGLADGNLEYKHRTEQDAQALPLNEVLTFLQARVRR.

The protein belongs to the class-II aminoacyl-tRNA synthetase family. ProS type 1 subfamily. Homodimer.

The protein localises to the cytoplasm. It catalyses the reaction tRNA(Pro) + L-proline + ATP = L-prolyl-tRNA(Pro) + AMP + diphosphate. In terms of biological role, catalyzes the attachment of proline to tRNA(Pro) in a two-step reaction: proline is first activated by ATP to form Pro-AMP and then transferred to the acceptor end of tRNA(Pro). As ProRS can inadvertently accommodate and process non-cognate amino acids such as alanine and cysteine, to avoid such errors it has two additional distinct editing activities against alanine. One activity is designated as 'pretransfer' editing and involves the tRNA(Pro)-independent hydrolysis of activated Ala-AMP. The other activity is designated 'posttransfer' editing and involves deacylation of mischarged Ala-tRNA(Pro). The misacylated Cys-tRNA(Pro) is not edited by ProRS. The polypeptide is Proline--tRNA ligase (Pseudomonas putida (strain W619)).